Here is a 682-residue protein sequence, read N- to C-terminus: Methionine synthase reductase (682 aa).

The Flavodoxin-like domain maps to 4-147 (FLIAFGSQTG…EVEPWIEKFF (144 aa)). FMN is bound at residue 93–124 (LLGLGDSNYSSYQTIPRKIDKQLTALGANRLF). The 246-residue stretch at 271 to 516 (TKPFEVLVVS…GKEPARFRLP (246 aa)) folds into the FAD-binding FR-type domain. Lys-293 provides a ligand contact to NADP(+). Residues 455 to 458 (RPYS) and 488 to 491 (GLAT) contribute to the FAD site. Residues 607 to 609 (RVQ) and Asp-643 contribute to the NADP(+) site. Trp-681 lines the FAD pocket.

It depends on FAD as a cofactor. FMN serves as cofactor.

It carries out the reaction 2 methylcob(III)alamin-[methionine synthase] + 2 S-adenosyl-L-homocysteine + NADP(+) + H(+) = 2 cob(II)alamin-[methionine synthase] + 2 S-adenosyl-L-methionine + NADPH. Functionally, involved in the reductive regeneration of cob(I)alamin cofactor required for the maintenance of methionine synthase in a functional state. The protein is Methionine synthase reductase of Caenorhabditis elegans.